A 45-amino-acid polypeptide reads, in one-letter code: Large ribosomal subunit protein bL36 (45 aa).

Residues 1–45 (MKVSSSIKADPSKGDKLVRRKGRLYVINKKDPNRKQRQAGPARKK) form a disordered region.

The protein belongs to the bacterial ribosomal protein bL36 family.

The protein is Large ribosomal subunit protein bL36 of Chlamydia caviae (strain ATCC VR-813 / DSM 19441 / 03DC25 / GPIC) (Chlamydophila caviae).